A 427-amino-acid polypeptide reads, in one-letter code: MDAVASLLGNASGIPPPCELGLDNETLFCLDQPPPSKEWQPAVQILLYSLIFLLSVLGNTLVITVLIRNKRMRTVTNIFLLSLAISDLMLCLFCMPFNLIPNLLKDFIFGSALCKTTTYLMGTSVSVSTLNLVAISLERYGAICKPLQSRVWQTKSHALKVIAATWCLSFAIMTPYPIYSNLVPFTKTNNQTANMCRFLLPSDVMQQAWHTFLLLILFLIPGIVMMVAYGMISLELYQGIKFDASQKKSAKERKASTGSGRFEDNDGCYLQRSKPTRQLELQQLSGGGGGRVSRIRSSSSAATLMAKKRVIRMLMVIVVLFFLCWMPIFSANAWRAYDTVSAERRLSGTPISFILLLSYTSSCVNPIIYCFMNRRFRLGFMATFPCCPNPGPPGPRAEAGEEEEGRTTRASLSRYSYSHMSASAPPS.

Over 1–41 (MDAVASLLGNASGIPPPCELGLDNETLFCLDQPPPSKEWQP) the chain is Extracellular. Residues N10 and N24 are each glycosylated (N-linked (GlcNAc...) asparagine). C18 and C29 are joined by a disulfide. The helical transmembrane segment at 42–67 (AVQILLYSLIFLLSVLGNTLVITVLI) threads the bilayer. At 68 to 77 (RNKRMRTVTN) the chain is on the cytoplasmic side. The chain crosses the membrane as a helical span at residues 78–104 (IFLLSLAISDLMLCLFCMPFNLIPNLL). Over 105–115 (KDFIFGSALCK) the chain is Extracellular. A disulfide bridge connects residues C114 and C196. A helical transmembrane segment spans residues 116 to 137 (TTTYLMGTSVSVSTLNLVAISL). Residues 138–157 (ERYGAICKPLQSRVWQTKSH) are Cytoplasmic-facing. A helical transmembrane segment spans residues 158 to 178 (ALKVIAATWCLSFAIMTPYPI). The Extracellular segment spans residues 179–210 (YSNLVPFTKTNNQTANMCRFLLPSDVMQQAWH). An N-linked (GlcNAc...) asparagine glycan is attached at N190. The helical transmembrane segment at 211–234 (TFLLLILFLIPGIVMMVAYGMISL) threads the bilayer. The Cytoplasmic segment spans residues 235–312 (ELYQGIKFDA…TLMAKKRVIR (78 aa)). Residues 313-333 (MLMVIVVLFFLCWMPIFSANA) traverse the membrane as a helical segment. The Extracellular portion of the chain corresponds to 334 to 348 (WRAYDTVSAERRLSG). The helical transmembrane segment at 349–372 (TPISFILLLSYTSSCVNPIIYCFM) threads the bilayer. Residues 373–427 (NRRFRLGFMATFPCCPNPGPPGPRAEAGEEEEGRTTRASLSRYSYSHMSASAPPS) lie on the Cytoplasmic side of the membrane. C386 is lipidated: S-palmitoyl cysteine. The tract at residues 391-427 (GPPGPRAEAGEEEEGRTTRASLSRYSYSHMSASAPPS) is disordered. Polar residues predominate over residues 411-421 (SLSRYSYSHMS).

The protein belongs to the G-protein coupled receptor 1 family.

It is found in the cell membrane. Functionally, receptor for cholecystokinin. Mediates pancreatic growth and enzyme secretion, smooth muscle contraction of the gall bladder and stomach. Has a 1000-fold higher affinity for CCK rather than for gastrin. It modulates feeding and dopamine-induced behavior in the central and peripheral nervous system. This receptor mediates its action by association with G proteins that activate a phosphatidylinositol-calcium second messenger system. This is Cholecystokinin receptor type A (CCKAR) from Oryctolagus cuniculus (Rabbit).